Here is a 22-residue protein sequence, read N- to C-terminus: uncharacterized protein (22 aa).

The segment at 1–22 is disordered; it reads MHNSIAYDKDGNSTGQKYYAYG.

This is an uncharacterized protein from Lactobacillus helveticus (Lactobacillus suntoryeus).